The primary structure comprises 243 residues: Small ribosomal subunit protein uS2c (243 aa).

It belongs to the universal ribosomal protein uS2 family.

It localises to the plastid. It is found in the chloroplast. This chain is Small ribosomal subunit protein uS2c (rps2), found in Cyanidium caldarium (Red alga).